The sequence spans 717 residues: ATP-dependent RNA helicase homolog DQX1 (717 aa).

The 169-residue stretch at 57–225 folds into the Helicase ATP-binding domain; that stretch reads QLESNPTGVV…WGNPPIVHIP (169 aa). 70 to 77 is an ATP binding site; the sequence is GEPGSGKS. Residues 170 to 173 carry the DEAQ box motif; that stretch reads DEAQ. In terms of domain architecture, Helicase C-terminal spans 248–447; sequence ACQAVLELCR…ALMQALEDLD (200 aa). The tract at residues 694–717 is disordered; sequence GMADSTAGSKSSSAQEFRDPCVLQ. A compositionally biased stretch (polar residues) spans 699–708; it reads TAGSKSSSAQ.

It is found in the nucleus. Functionally, might be involved in RNA metabolism; it is missing helicase motif III and may not have helicase activity. The polypeptide is ATP-dependent RNA helicase homolog DQX1 (DQX1) (Homo sapiens (Human)).